A 109-amino-acid polypeptide reads, in one-letter code: Spermidine export protein MdtI (109 aa).

Residues 1-5 (MAQFE) lie on the Periplasmic side of the membrane. Residues 6-26 (WVHAAWLALAIVLEIVANVFL) form a helical membrane-spanning segment. At 27–35 (KFSDGFRRK) the chain is on the cytoplasmic side. A helical transmembrane segment spans residues 36-56 (IFGLLSLAAVLAAFSALSQAV). Over 57–63 (KGIDLSV) the chain is Periplasmic. A helical membrane pass occupies residues 64 to 84 (VYALWGGFGIAATLAAGWILF). The Cytoplasmic portion of the chain corresponds to 85-87 (GQR). A helical membrane pass occupies residues 88–108 (LNRKGWIGLVLLLAGMIMVKL). A topological domain (periplasmic) is located at residue A109.

This sequence belongs to the drug/metabolite transporter (DMT) superfamily. Small multidrug resistance (SMR) (TC 2.A.7.1) family. MdtI subfamily. As to quaternary structure, forms a complex with MdtJ.

The protein localises to the cell inner membrane. Its function is as follows. Catalyzes the excretion of spermidine. The sequence is that of Spermidine export protein MdtI (mdtI) from Shigella flexneri.